Reading from the N-terminus, the 157-residue chain is ATP synthase subunit b (157 aa).

A helical transmembrane segment spans residues 7–29 (MFGQLIMFTMFTWFCMKFVWPPI).

Belongs to the ATPase B chain family. As to quaternary structure, F-type ATPases have 2 components, F(1) - the catalytic core - and F(0) - the membrane proton channel. F(1) has five subunits: alpha(3), beta(3), gamma(1), delta(1), epsilon(1). F(0) has three main subunits: a(1), b(2) and c(10-14). The alpha and beta chains form an alternating ring which encloses part of the gamma chain. F(1) is attached to F(0) by a central stalk formed by the gamma and epsilon chains, while a peripheral stalk is formed by the delta and b chains.

The protein localises to the cell inner membrane. Functionally, f(1)F(0) ATP synthase produces ATP from ADP in the presence of a proton or sodium gradient. F-type ATPases consist of two structural domains, F(1) containing the extramembraneous catalytic core and F(0) containing the membrane proton channel, linked together by a central stalk and a peripheral stalk. During catalysis, ATP synthesis in the catalytic domain of F(1) is coupled via a rotary mechanism of the central stalk subunits to proton translocation. In terms of biological role, component of the F(0) channel, it forms part of the peripheral stalk, linking F(1) to F(0). In Ruthia magnifica subsp. Calyptogena magnifica, this protein is ATP synthase subunit b.